A 214-amino-acid chain; its full sequence is 3,4-dihydroxy-2-butanone 4-phosphate synthase (214 aa).

D-ribulose 5-phosphate-binding positions include 37 to 38 (RE), Asp-42, 150 to 154 (RRGHT), and Glu-174. Position 38 (Glu-38) interacts with Mg(2+). Position 153 (His-153) interacts with Mg(2+).

This sequence belongs to the DHBP synthase family. Homodimer. Mg(2+) is required as a cofactor. The cofactor is Mn(2+).

The catalysed reaction is D-ribulose 5-phosphate = (2S)-2-hydroxy-3-oxobutyl phosphate + formate + H(+). Its pathway is cofactor biosynthesis; riboflavin biosynthesis; 2-hydroxy-3-oxobutyl phosphate from D-ribulose 5-phosphate: step 1/1. In terms of biological role, catalyzes the conversion of D-ribulose 5-phosphate to formate and 3,4-dihydroxy-2-butanone 4-phosphate. This Nitratidesulfovibrio vulgaris (strain ATCC 29579 / DSM 644 / CCUG 34227 / NCIMB 8303 / VKM B-1760 / Hildenborough) (Desulfovibrio vulgaris) protein is 3,4-dihydroxy-2-butanone 4-phosphate synthase.